Reading from the N-terminus, the 166-residue chain is Small ribosomal subunit protein uS5 (166 aa).

An S5 DRBM domain is found at 11 to 74 (LQEKLIAVNR…EKARRNMINV (64 aa)).

The protein belongs to the universal ribosomal protein uS5 family. As to quaternary structure, part of the 30S ribosomal subunit. Contacts proteins S4 and S8.

In terms of biological role, with S4 and S12 plays an important role in translational accuracy. Located at the back of the 30S subunit body where it stabilizes the conformation of the head with respect to the body. This is Small ribosomal subunit protein uS5 from Haemophilus influenzae (strain 86-028NP).